Here is a 499-residue protein sequence, read N- to C-terminus: Anaerobic nitric oxide reductase flavorubredoxin (499 aa).

Positions 30 to 210 are zinc metallo-hydrolase; that stretch reads TKGTSYNSYL…PFSALVTAKI (181 aa). Residues histidine 79, glutamate 81, aspartate 83, histidine 147, aspartate 166, and histidine 227 each coordinate Fe cation. A Flavodoxin-like domain is found at 254 to 393; the sequence is ITLFYDSMSN…LCREHGQFIA (140 aa). Residues 260–264 and 342–369 contribute to the FMN site; these read SMSNN and AFGS…ETAV. The Rubredoxin-like domain maps to 447–498; that stretch reads KQCMLCTVCNWVYDPEIGEPNQGVEPNTAWIDVPDYFLCPECNLGKDVFVEV. Fe cation contacts are provided by cysteine 452, cysteine 455, cysteine 485, and cysteine 488.

This sequence in the N-terminal section; belongs to the zinc metallo-hydrolase group 3 family. In terms of assembly, homotetramer. Fe cation serves as cofactor. The cofactor is FMN.

The protein localises to the cytoplasm. Its pathway is nitrogen metabolism; nitric oxide reduction. Its function is as follows. Anaerobic nitric oxide reductase; uses NADH to detoxify nitric oxide (NO), protecting several 4Fe-4S NO-sensitive enzymes. Has at least 2 reductase partners, only one of which (NorW, flavorubredoxin reductase) has been identified. NO probably binds to the di-iron center; electrons enter from the NorW at rubredoxin and are transferred sequentially to the FMN center and the di-iron center. Also able to function as an aerobic oxygen reductase. This chain is Anaerobic nitric oxide reductase flavorubredoxin, found in Aliivibrio salmonicida (strain LFI1238) (Vibrio salmonicida (strain LFI1238)).